A 406-amino-acid polypeptide reads, in one-letter code: Mitochondrial potassium channel (406 aa).

Residues 1–35 constitute a mitochondrion transit peptide; it reads MTGCSPVFAMQHVVGVPRILVRRTFLGTDVTMTRT. The Mitochondrial matrix portion of the chain corresponds to 36 to 198; sequence LCSPGPREKR…KERTRAERTK (163 aa). Positions 113–140 form a coiled coil; the sequence is VREAREGLEAQQTKLKEVRDRLDRVSRE. Residues 199-219 traverse the membrane as a helical segment; the sequence is NWSLIGSVLGALIGVAGSTYV. At 220 to 382 the chain is on the mitochondrial intermembrane side; it reads NRVRLQELKA…LEAQANRNTV (163 aa). A helical transmembrane segment spans residues 383–403; the sequence is SSTLVTCVTFLATLPLLYMLF. Residues 404 to 406 lie on the Mitochondrial matrix side of the membrane; it reads KTS.

In terms of assembly, the mitochondrial potassium channel (mitoK(ATP)) is composed of 4 subunits of CCDC51/MITOK and 4 subunits of ABCB8/MITOSUR.

It localises to the mitochondrion inner membrane. The catalysed reaction is K(+)(in) = K(+)(out). Its activity is regulated as follows. Inhibited by ATP via mitoK(ATP) channel. In terms of biological role, pore-forming subunit of the mitochondrial ATP-gated potassium channel (mitoK(ATP)). Together with ATP-binding subunit ABCB8/MITOSUR of the mitoK(ATP) channel, mediates ATP-dependent K(+) currents across the mitochondrial inner membrane. An increase in ATP intracellular levels closes the channel, inhibiting K(+) transport, whereas a decrease in ATP levels enhances K(+) uptake in the mitochondrial matrix. May contribute to the homeostatic control of cellular metabolism under stress conditions by regulating the mitochondrial matrix volume. The sequence is that of Mitochondrial potassium channel from Mus musculus (Mouse).